We begin with the raw amino-acid sequence, 380 residues long: Flap endonuclease 1 (380 aa).

An N-domain region spans residues 1–104; the sequence is MGIQGLAKLI…GELAKRSERR (104 aa). The residue at position 19 (Arg19) is a Symmetric dimethylarginine; by PRMT5. Asp34 lines the Mg(2+) pocket. The DNA site is built by Arg47 and Arg70. Lys80 carries the N6-acetyllysine modification. Mg(2+) is bound at residue Asp86. 2 positions are modified to symmetric dimethylarginine; by PRMT5: Arg100 and Arg104. An I-domain region spans residues 122 to 253; it reads EVEKFTKRLV…KRAVDLIQKH (132 aa). 4 residues coordinate Mg(2+): Glu158, Glu160, Asp179, and Asp181. DNA is bound at residue Glu158. Ser187 is modified (phosphoserine; by CDK2). Arg192 is subject to Symmetric dimethylarginine; by PRMT5. Residue Ser197 is modified to Phosphoserine. DNA is bound by residues Gly231 and Asp233. Position 233 (Asp233) interacts with Mg(2+). Phosphoserine is present on residues Ser255, Ser293, and Ser335. The segment at 327–380 is disordered; it reads RLSKSRQGSTQGRLDDFFKVTGSLSSAKRKEPEPKGSTKKKAKTGAAGKFKRGK. Thr336 bears the Phosphothreonine mark. The segment at 336–344 is interaction with PCNA; the sequence is TQGRLDDFF. The residue at position 354 (Lys354) is an N6-acetyllysine. The span at 363 to 380 shows a compositional bias: basic residues; sequence STKKKAKTGAAGKFKRGK. Thr364 carries the post-translational modification Phosphothreonine. 3 positions are modified to N6-acetyllysine: Lys375, Lys377, and Lys380.

Belongs to the XPG/RAD2 endonuclease family. FEN1 subfamily. Interacts with PCNA. Three molecules of FEN1 bind to one PCNA trimer with each molecule binding to one PCNA monomer. PCNA stimulates the nuclease activity without altering cleavage specificity. The C-terminal domain binds EP300; can bind simultaneously to both PCNA and EP300. Interacts with DDX11; this interaction is direct and increases flap endonuclease activity of FEN1. Interacts with WDR4; regulating its endonuclease activity. Interacts with POLB. Requires Mg(2+) as cofactor. Post-translationally, acetylated by EP300. Acetylation inhibits both endonuclease and exonuclease activity. Acetylation also reduces DNA-binding activity but does not affect interaction with PCNA or EP300. Phosphorylation upon DNA damage induces relocalization to the nuclear plasma. Phosphorylation at Ser-187 by CDK2 occurs during late S-phase and results in dissociation from PCNA. In terms of processing, methylation at Arg-192 by PRMT5 impedes Ser-187 phosphorylation and increases interaction with PCNA.

It localises to the nucleus. Its subcellular location is the nucleolus. It is found in the nucleoplasm. The protein localises to the mitochondrion. Its function is as follows. Structure-specific nuclease with 5'-flap endonuclease and 5'-3' exonuclease activities involved in DNA replication and repair. During DNA replication, cleaves the 5'-overhanging flap structure that is generated by displacement synthesis when DNA polymerase encounters the 5'-end of a downstream Okazaki fragment. It enters the flap from the 5'-end and then tracks to cleave the flap base, leaving a nick for ligation. Also involved in the long patch base excision repair (LP-BER) pathway, by cleaving within the apurinic/apyrimidinic (AP) site-terminated flap. Acts as a genome stabilization factor that prevents flaps from equilibrating into structures that lead to duplications and deletions. Also possesses 5'-3' exonuclease activity on nicked or gapped double-stranded DNA, and exhibits RNase H activity. Also involved in replication and repair of rDNA and in repairing mitochondrial DNA. The chain is Flap endonuclease 1 from Macaca fascicularis (Crab-eating macaque).